The chain runs to 282 residues: UPF0294 protein VIBHAR_03217 (282 aa).

The protein belongs to the UPF0294 family.

The protein localises to the cytoplasm. This chain is UPF0294 protein VIBHAR_03217, found in Vibrio campbellii (strain ATCC BAA-1116).